The sequence spans 730 residues: MTTAVTQAIIDGFFDASNGDPFATLGMHETEQGIEIRTLLPDANRMVVIERESGKEITELDCVDERGFFVGVIPNCRQFFAYQLQVFWGNEAQIIEDPYRFHPMIDDLEQWLLSEGSMLRPYEVLGAHFMECDGVSGVNFRLWAPNARRVSIVGDFNYWDGRRHPMRFHSKSGVWELFLPKASLGQLYKFELIDCHGNLRLKADPFAFSSQLRPDTASQVSALPNVVEMTEARKKANQGNQPISIYEVHLGSWRRNLENNFWLDYDQIADELIPYVKEMGFTHIEFLPLSEFPFDGSWGYQPLGLYSPTSRFGSPEAFRRLVKRAHEAGINVILDWVPGHFPSDTHGLVAFDGTALYEHEDPREGYHQDWNTLIYNYGRNEVKNFLSSNALYWLERFGVDGIRVDAVASMIYRDYSRAEGEWIPNQYGGRENLEAIEFLKHTNWKIHSEMAGAISIAEESTSFAGVTHPSENGGLGFNFKWNMGWMNDTLAYMKLDPIYRQYHHNKMTFGMVYQYSENFVLPLSHDEVVHGKYSLLGKMPGDTWQKFANLRAYYGYMWGYPGKKLLFMGNEFAQGREWNYEESLDWFLLDENIGGGWHKGVLKLVKDLNQIYQKNRPLFELDNSPEGFDWLVVDDAANSVLAFERRSSNGERIIVVSNFTPVPRHNYRIGVNVAGKYEEILNTDSMYYEGSNVGNFGCVASEQIESHGRENSISVSIPPLATVYLRLKTK.

The Nucleophile role is filled by D405. The active-site Proton donor is the E458.

It belongs to the glycosyl hydrolase 13 family. GlgB subfamily. Monomer.

It catalyses the reaction Transfers a segment of a (1-&gt;4)-alpha-D-glucan chain to a primary hydroxy group in a similar glucan chain.. The protein operates within glycan biosynthesis; glycogen biosynthesis. In terms of biological role, catalyzes the formation of the alpha-1,6-glucosidic linkages in glycogen by scission of a 1,4-alpha-linked oligosaccharide from growing alpha-1,4-glucan chains and the subsequent attachment of the oligosaccharide to the alpha-1,6 position. The sequence is that of 1,4-alpha-glucan branching enzyme GlgB (glgB) from Haemophilus influenzae (strain ATCC 51907 / DSM 11121 / KW20 / Rd).